Reading from the N-terminus, the 356-residue chain is (+)-(1(10)E,4E,6S,7R)-germacradien-6-ol synthase (356 aa).

Residues Asp-86 and Asp-91 each contribute to the Mg(2+) site. A DDXXXD motif motif is present at residues 86–91; it reads DDEYCD. Arg-181 provides a ligand contact to substrate. Asn-227 and Ser-231 together coordinate Mg(2+). Lys-234 lines the substrate pocket. Glu-235 lines the Mg(2+) pocket. Residue 314–315 participates in substrate binding; that stretch reads RY.

This sequence belongs to the terpene synthase family. Requires Mg(2+) as cofactor.

It catalyses the reaction (2E,6E)-farnesyl diphosphate + H2O = (+)-(1(10)E,4E,6S,7R)-germacradien-6-ol + diphosphate. It participates in secondary metabolite biosynthesis; terpenoid biosynthesis. Functionally, catalyzes the conversion of (2E,6E)-farnesyl diphosphate (FPP) to yield the sesquiterpene (+)-(1(10)E,4E,6S,7R)-germacradien-6-ol via a putative 1,10-cyclization, which could require the abstraction of the pyrophosphate from FPP to yield the (E,E)-germacradienyl cation. The only accepted substrate is farnesyl diphosphate (FPP). The sequence is that of (+)-(1(10)E,4E,6S,7R)-germacradien-6-ol synthase from Streptomyces pratensis (strain ATCC 33331 / IAF-45CD).